A 345-amino-acid chain; its full sequence is Selenide, water dikinase (345 aa).

Cys16 is a catalytic residue. Residues Lys19 and 45-47 (TSE) each bind ATP. Asp48 contributes to the Mg(2+) binding site. Residues Asp65, Asp88, and 136–138 (GHT) each bind ATP. Asp88 is a binding site for Mg(2+). Asp224 serves as a coordination point for Mg(2+).

Belongs to the selenophosphate synthase 1 family. Class I subfamily. In terms of assembly, homodimer. Requires Mg(2+) as cofactor.

The enzyme catalyses hydrogenselenide + ATP + H2O = selenophosphate + AMP + phosphate + 2 H(+). Functionally, synthesizes selenophosphate from selenide and ATP. This chain is Selenide, water dikinase, found in Aliarcobacter butzleri (strain RM4018) (Arcobacter butzleri).